The primary structure comprises 273 residues: Glutamate 5-kinase (273 aa).

An ATP-binding site is contributed by Lys-15. Residues Ser-55, Asp-142, and Asn-158 each contribute to the substrate site. ATP-binding positions include 178 to 179 and 220 to 226; these read SD and TGGMLSK.

Belongs to the glutamate 5-kinase family.

It is found in the cytoplasm. It carries out the reaction L-glutamate + ATP = L-glutamyl 5-phosphate + ADP. The protein operates within amino-acid biosynthesis; L-proline biosynthesis; L-glutamate 5-semialdehyde from L-glutamate: step 1/2. Functionally, catalyzes the transfer of a phosphate group to glutamate to form L-glutamate 5-phosphate. The protein is Glutamate 5-kinase of Streptococcus pyogenes serotype M4 (strain MGAS10750).